A 160-amino-acid chain; its full sequence is Cytochrome b6-f complex subunit 4 (160 aa).

A run of 3 helical transmembrane segments spans residues leucine 36–valine 56, leucine 95–glutamate 115, and threonine 131–isoleucine 151.

Belongs to the cytochrome b family. PetD subfamily. The 4 large subunits of the cytochrome b6-f complex are cytochrome b6, subunit IV (17 kDa polypeptide, petD), cytochrome f and the Rieske protein, while the 4 small subunits are petG, petL, petM and petN. The complex functions as a dimer.

The protein resides in the plastid. It is found in the chloroplast thylakoid membrane. In terms of biological role, component of the cytochrome b6-f complex, which mediates electron transfer between photosystem II (PSII) and photosystem I (PSI), cyclic electron flow around PSI, and state transitions. The protein is Cytochrome b6-f complex subunit 4 of Solanum tuberosum (Potato).